The following is a 432-amino-acid chain: Homogentisate 1,2-dioxygenase (432 aa).

His-286 acts as the Proton acceptor in catalysis. Positions 329 and 335 each coordinate Fe cation. Residues Tyr-344 and His-365 each coordinate homogentisate. His-365 contacts Fe cation.

The protein belongs to the homogentisate dioxygenase family. As to quaternary structure, hexamer; dimer of trimers. Fe cation serves as cofactor.

The catalysed reaction is homogentisate + O2 = 4-maleylacetoacetate + H(+). Its pathway is amino-acid degradation; L-phenylalanine degradation; acetoacetate and fumarate from L-phenylalanine: step 4/6. Functionally, involved in the catabolism of homogentisate (2,5-dihydroxyphenylacetate or 2,5-OH-PhAc), a central intermediate in the degradation of phenylalanine and tyrosine. Catalyzes the oxidative ring cleavage of the aromatic ring of homogentisate to yield maleylacetoacetate. The chain is Homogentisate 1,2-dioxygenase from Bordetella petrii (strain ATCC BAA-461 / DSM 12804 / CCUG 43448).